Reading from the N-terminus, the 499-residue chain is Na(+)/H(+) antiporter NhaB (499 aa).

12 helical membrane passes run 38-58 (VSPFLAGWALIIEFIFTLAMA), 62-82 (YPLQPGGLLAIQAVLLGLTSA), 89-109 (VLANFKVILLLMFMVAGIYFM), 128-148 (LLLSLLFSFVAAVLSAFLDAL), 149-169 (TVTAVLIAVAVGFYAVYHRFA), 204-224 (LIMHGAVGTALGGVATLVGEP), 242-262 (LVMAPISVPALIGGLLTCAIL), 310-330 (VLVFALALHLAEVGLIGLLII), 349-369 (FEEALPFTALLVVFFAVVAVI), 393-413 (MFFVANGVLSMISDNVFVATV), 449-469 (ATPNGQAAFLFLLTSALAPLI), and 478-498 (IMALPYTIVLGAVGLGSVILF).

The protein belongs to the NhaB Na(+)/H(+) (TC 2.A.34) antiporter family.

The protein localises to the cell inner membrane. The catalysed reaction is 2 Na(+)(in) + 3 H(+)(out) = 2 Na(+)(out) + 3 H(+)(in). Functionally, na(+)/H(+) antiporter that extrudes sodium in exchange for external protons. This Saccharophagus degradans (strain 2-40 / ATCC 43961 / DSM 17024) protein is Na(+)/H(+) antiporter NhaB.